We begin with the raw amino-acid sequence, 371 residues long: Queuine tRNA-ribosyltransferase (371 aa).

The Proton acceptor role is filled by D90. Residues 90-94 (DSGGF), D144, Q188, and G215 contribute to the substrate site. Positions 246-252 (GVGTPED) are RNA binding. The Nucleophile role is filled by D265. The segment at 270 to 274 (TRNAR) is RNA binding; important for wobble base 34 recognition. C303, C305, C308, and H334 together coordinate Zn(2+).

Belongs to the queuine tRNA-ribosyltransferase family. Homodimer. Within each dimer, one monomer is responsible for RNA recognition and catalysis, while the other monomer binds to the replacement base PreQ1. Zn(2+) is required as a cofactor.

The enzyme catalyses 7-aminomethyl-7-carbaguanine + guanosine(34) in tRNA = 7-aminomethyl-7-carbaguanosine(34) in tRNA + guanine. It functions in the pathway tRNA modification; tRNA-queuosine biosynthesis. In terms of biological role, catalyzes the base-exchange of a guanine (G) residue with the queuine precursor 7-aminomethyl-7-deazaguanine (PreQ1) at position 34 (anticodon wobble position) in tRNAs with GU(N) anticodons (tRNA-Asp, -Asn, -His and -Tyr). Catalysis occurs through a double-displacement mechanism. The nucleophile active site attacks the C1' of nucleotide 34 to detach the guanine base from the RNA, forming a covalent enzyme-RNA intermediate. The proton acceptor active site deprotonates the incoming PreQ1, allowing a nucleophilic attack on the C1' of the ribose to form the product. After dissociation, two additional enzymatic reactions on the tRNA convert PreQ1 to queuine (Q), resulting in the hypermodified nucleoside queuosine (7-(((4,5-cis-dihydroxy-2-cyclopenten-1-yl)amino)methyl)-7-deazaguanosine). This Neisseria gonorrhoeae (strain ATCC 700825 / FA 1090) protein is Queuine tRNA-ribosyltransferase.